We begin with the raw amino-acid sequence, 156 residues long: ATP synthase subunit b (156 aa).

The chain crosses the membrane as a helical span at residues 7–29 (LLGQAISFLLFVWFCMKFVWPPL).

Belongs to the ATPase B chain family. F-type ATPases have 2 components, F(1) - the catalytic core - and F(0) - the membrane proton channel. F(1) has five subunits: alpha(3), beta(3), gamma(1), delta(1), epsilon(1). F(0) has three main subunits: a(1), b(2) and c(10-14). The alpha and beta chains form an alternating ring which encloses part of the gamma chain. F(1) is attached to F(0) by a central stalk formed by the gamma and epsilon chains, while a peripheral stalk is formed by the delta and b chains.

The protein resides in the cell inner membrane. Functionally, f(1)F(0) ATP synthase produces ATP from ADP in the presence of a proton or sodium gradient. F-type ATPases consist of two structural domains, F(1) containing the extramembraneous catalytic core and F(0) containing the membrane proton channel, linked together by a central stalk and a peripheral stalk. During catalysis, ATP synthesis in the catalytic domain of F(1) is coupled via a rotary mechanism of the central stalk subunits to proton translocation. Component of the F(0) channel, it forms part of the peripheral stalk, linking F(1) to F(0). The polypeptide is ATP synthase subunit b (Shewanella pealeana (strain ATCC 700345 / ANG-SQ1)).